Here is a 945-residue protein sequence, read N- to C-terminus: Valine--tRNA ligase (945 aa).

A 'HIGH' region motif is present at residues 42-52 (PNVTGTLHMGH). A 'KMSKS' region motif is present at residues 552 to 556 (KMSKS). Lys-555 contributes to the ATP binding site. The stretch at 879-945 (DKAAETARLS…VQNQLAKLKD (67 aa)) forms a coiled coil.

The protein belongs to the class-I aminoacyl-tRNA synthetase family. ValS type 1 subfamily. In terms of assembly, monomer.

It is found in the cytoplasm. It carries out the reaction tRNA(Val) + L-valine + ATP = L-valyl-tRNA(Val) + AMP + diphosphate. In terms of biological role, catalyzes the attachment of valine to tRNA(Val). As ValRS can inadvertently accommodate and process structurally similar amino acids such as threonine, to avoid such errors, it has a 'posttransfer' editing activity that hydrolyzes mischarged Thr-tRNA(Val) in a tRNA-dependent manner. In Neisseria meningitidis serogroup B (strain ATCC BAA-335 / MC58), this protein is Valine--tRNA ligase.